We begin with the raw amino-acid sequence, 268 residues long: Minor capsid protein VP2 (268 aa).

Residues 132 to 144 (STPQSLGALTGRT) show a composition bias toward polar residues. Residues 132-199 (STPQSLGALT…SLSSAARTRS (68 aa)) are disordered. Low complexity predominate over residues 145 to 163 (NSRVSAPARSSPSALSNAP). A compositionally biased stretch (polar residues) spans 164 to 178 (TATSLHSNQTVSTRL). The segment covering 179–195 (GSSAGSGTGVSSLSSAA) has biased composition (low complexity).

Belongs to the norovirus VP2 family. In terms of assembly, homooligomer. The portal-like structure consists in 12 copies of VP2. Interacts with capsid protein VP1.

The protein localises to the virion. It localises to the host cytoplasm. Minor structural protein that forms a portal-like structure at a unique three-fold axis of symmetry, following binding to the host receptor. The channel formed by VP2 may allow the delivery of the viral genome through the host endosomal membrane. In Lordsdale virus (strain GII/Human/United Kingdom/Lordsdale/1993) (Human enteric calicivirus), this protein is Minor capsid protein VP2.